The chain runs to 756 residues: Serine/threonine-protein kinase CBK1 (756 aa).

2 disordered regions span residues 1-180 and 242-261; these read MYNS…SYSS and QQQQ…NNGT. Positions 23 to 34 are enriched in low complexity; it reads QQQDQQHQQQQQ. Residues 53–77 show a composition bias toward polar residues; the sequence is FSSNYMKEQGSHQSLQEHLQRETGN. Residue Thr-109 is modified to Phosphothreonine. Positions 120–180 are enriched in polar residues; the sequence is HNNNSQSMVQ…TLRSNGSYSS (61 aa). The segment covering 242–255 has biased composition (low complexity); sequence QQQQQQQSQSPVQS. In terms of domain architecture, Protein kinase spans 352-672; it reads FHTVKVIGKG…ADEIKSHPFF (321 aa). Residues 358–366 and Lys-381 each bind ATP; that span reads IGKGAFGEV. Catalysis depends on Asp-475, which acts as the Proton acceptor. Residues 673–754 form the AGC-kinase C-terminal domain; the sequence is RGVDWNTIRQ…SRFDYLTRKN (82 aa). A disordered region spans residues 707 to 732; the sequence is NVPDSPAMAQAAKQREQMTKQGGSAP.

It belongs to the protein kinase superfamily. STE Ser/Thr protein kinase family. COT1 subfamily. In terms of assembly, associates with PAG1/TAO3 and interacts with MOB2.

It carries out the reaction L-seryl-[protein] + ATP = O-phospho-L-seryl-[protein] + ADP + H(+). The catalysed reaction is L-threonyl-[protein] + ATP = O-phospho-L-threonyl-[protein] + ADP + H(+). In terms of biological role, protein kinase that seems to play a role in the regulation of cell morphogenesis and proliferation. In Saccharomyces cerevisiae (strain ATCC 204508 / S288c) (Baker's yeast), this protein is Serine/threonine-protein kinase CBK1 (CBK1).